Consider the following 164-residue polypeptide: UPF0251 protein MM_1448 (164 aa).

The span at 91 to 100 (GDYRMPRGDR) shows a compositional bias: basic and acidic residues. The segment at 91-123 (GDYRMPRGDRTGPAGQGPAGGGRGRGQGKGRGG) is disordered. The segment covering 104–115 (AGQGPAGGGRGR) has biased composition (gly residues).

Belongs to the UPF0251 family.

This Methanosarcina mazei (strain ATCC BAA-159 / DSM 3647 / Goe1 / Go1 / JCM 11833 / OCM 88) (Methanosarcina frisia) protein is UPF0251 protein MM_1448.